The chain runs to 508 residues: Photosystem II CP47 reaction center protein (508 aa).

A run of 6 helical transmembrane segments spans residues 21–36 (AVHI…WAGS), 101–115 (IVFS…IWHW), 140–156 (GIHL…FGAF), 203–218 (IAAG…FHLS), 237–252 (VLSS…AFIV), and 457–472 (TFAL…HGAR).

Belongs to the PsbB/PsbC family. PsbB subfamily. PSII is composed of 1 copy each of membrane proteins PsbA, PsbB, PsbC, PsbD, PsbE, PsbF, PsbH, PsbI, PsbJ, PsbK, PsbL, PsbM, PsbT, PsbX, PsbY, PsbZ, Psb30/Ycf12, at least 3 peripheral proteins of the oxygen-evolving complex and a large number of cofactors. It forms dimeric complexes. Binds multiple chlorophylls. PSII binds additional chlorophylls, carotenoids and specific lipids. is required as a cofactor.

The protein localises to the plastid. It is found in the chloroplast thylakoid membrane. One of the components of the core complex of photosystem II (PSII). It binds chlorophyll and helps catalyze the primary light-induced photochemical processes of PSII. PSII is a light-driven water:plastoquinone oxidoreductase, using light energy to abstract electrons from H(2)O, generating O(2) and a proton gradient subsequently used for ATP formation. In Gnetum parvifolium (Small-leaved jointfir), this protein is Photosystem II CP47 reaction center protein.